The sequence spans 518 residues: Membrane-bound lytic murein transglycosylase F (518 aa).

A signal peptide spans Met1 to Ala21. Residues Leu22–Gly269 form a non-LT domain region. The LT domain stretch occupies residues Asp270–Asn518. Residue Glu314 is part of the active site.

In the N-terminal section; belongs to the bacterial solute-binding protein 3 family. The protein in the C-terminal section; belongs to the transglycosylase Slt family.

The protein localises to the cell outer membrane. It carries out the reaction Exolytic cleavage of the (1-&gt;4)-beta-glycosidic linkage between N-acetylmuramic acid (MurNAc) and N-acetylglucosamine (GlcNAc) residues in peptidoglycan, from either the reducing or the non-reducing ends of the peptidoglycan chains, with concomitant formation of a 1,6-anhydrobond in the MurNAc residue.. Its function is as follows. Murein-degrading enzyme that degrades murein glycan strands and insoluble, high-molecular weight murein sacculi, with the concomitant formation of a 1,6-anhydromuramoyl product. Lytic transglycosylases (LTs) play an integral role in the metabolism of the peptidoglycan (PG) sacculus. Their lytic action creates space within the PG sacculus to allow for its expansion as well as for the insertion of various structures such as secretion systems and flagella. This Shigella boydii serotype 18 (strain CDC 3083-94 / BS512) protein is Membrane-bound lytic murein transglycosylase F.